We begin with the raw amino-acid sequence, 298 residues long: uncharacterized protein (298 aa).

10 consecutive transmembrane segments (helical) span residues Ile5–Thr23, Ile33–Phe52, Ala72–Trp91, Val101–Phe120, Phe127–Leu145, Leu149–Ile166, Leu175–Leu194, Phe207–Ala229, Leu238–Ile260, and Tyr265–Tyr284. The 132-residue stretch at Phe13–Val144 folds into the EamA domain.

Belongs to the EamA transporter family.

It localises to the cell membrane. This is an uncharacterized protein from Haemophilus influenzae (strain ATCC 51907 / DSM 11121 / KW20 / Rd).